A 513-amino-acid chain; its full sequence is MTHVINLDGEHLTLEDVIAVARHGATCEIDQEAKKAVEASRKIVDDIVREKRVVYGVTTGFGSLCNVSISPEDTTQLQENLIRTHASGFGDPLPEDAVRAIMLIRINSLVKGYSGIRLSTVEKLLELLNKGVVPFIPEKGSLGASGDLAPLAHMVLPMLGLGHAYYQGQLLSGQEALDKAGIEKIALAAKEGLALINGTTVLTGIGALATYDAIQLLKLSDVAGALSMEVHNGITSPFEEDLHTIRPQSGQLATARNIRNLLEGSGNTTVATQQRVQDPYTLRCIPQIHGASKDSIAYVKTKVEIEINSVTDNPIITKEGHVISGGNFHGEPMAQPFDFLGIAISEIGNVSERRVERLVNSQLSKLPSFLVKHPGLNSGFMITQYACASLASENKVLAHPASVDSIPSCENQEDFVSMGTTAARKAAEILKNSRRIVATEIMAACQALDLKPENHELGKGTKPAYDLFRQHVRFIEFDKDIEIYEELNKASELIESDEFLAAVENAVDLSIQF.

The 5-imidazolinone (Ala-Gly) cross-link spans 144–146; it reads ASG. Residue Ser-145 is modified to 2,3-didehydroalanine (Ser).

It belongs to the PAL/histidase family. Contains an active site 4-methylidene-imidazol-5-one (MIO), which is formed autocatalytically by cyclization and dehydration of residues Ala-Ser-Gly.

The protein localises to the cytoplasm. The enzyme catalyses L-histidine = trans-urocanate + NH4(+). Its pathway is amino-acid degradation; L-histidine degradation into L-glutamate; N-formimidoyl-L-glutamate from L-histidine: step 1/3. The chain is Histidine ammonia-lyase from Streptococcus gordonii (strain Challis / ATCC 35105 / BCRC 15272 / CH1 / DL1 / V288).